Consider the following 560-residue polypeptide: Protein tweety homolog 3 (560 aa).

The Extracellular portion of the chain corresponds to 1 to 43; that stretch reads MAAVVNYSPPWWVNLFHRLPHFNLQFQQTSSDFRPDDSDYQKA. A helical transmembrane segment spans residues 44 to 64; the sequence is VLLLGAAALVCLALDLLFLLF. Topologically, residues 65–87 are cytoplasmic; sequence YSFWLCCCRRKNHDSPNADCCCT. A helical membrane pass occupies residues 88-108; it reads AWCVIIATLVCSAGIAVGFYG. The Extracellular portion of the chain corresponds to 109–212; it reads NGETCDGVTR…TEQYDWYRWL (104 aa). Residues E111 and D114 each contribute to the Ca(2+) site. N127 and N145 each carry an N-linked (GlcNAc...) asparagine glycan. Residues 213–233 form a helical membrane-spanning segment; the sequence is GYLGLLLFDVIICLLVLVGLI. The Cytoplasmic segment spans residues 234-238; it reads RNSRS. Residues 239-259 traverse the membrane as a helical segment; sequence ILIGVCFLGVLTLVISWASLG. The Extracellular segment spans residues 260-387; that stretch reads LEFSFAVGAS…LTGLCYDGVE (128 aa). Cystine bridges form between C272/C382 and C300/C367. The N-linked (GlcNAc...) asparagine glycan is linked to N352. The chain crosses the membrane as a helical span at residues 388–408; the sequence is GLIYLVLFSFVTALMFSSIVC. Over 409–560 the chain is Cytoplasmic; sequence SVPHTWQSKR…AIHRPHSAIH (152 aa). Disordered regions lie at residues 415 to 435 and 486 to 560; these read QSKR…GSRA and TPRC…SAIH. Polar residues predominate over residues 539–549; the sequence is TSRSAPNSRPN.

Belongs to the tweety family. Homotetramer; disulfide-linked. Forms cis-homodimers in the presence of Ca(2+).

The protein resides in the cell membrane. It carries out the reaction chloride(in) = chloride(out). The enzyme catalyses L-glutamate(out) = L-glutamate(in). In terms of biological role, may act as a calcium-independent, swelling-dependent volume-regulated anion channel (VRAC-swell) which plays a pivotal role in the process of regulatory volume decrease (RVD) in the brain through the efflux of anions like chloride and organic osmolytes like glutamate. Probable large-conductance Ca(2+)-activated chloride channel. This chain is Protein tweety homolog 3 (ttyh3b), found in Danio rerio (Zebrafish).